Reading from the N-terminus, the 160-residue chain is uncharacterized protein (160 aa).

The protein belongs to the Dps family.

This is an uncharacterized protein from Haemophilus influenzae (strain ATCC 51907 / DSM 11121 / KW20 / Rd).